Reading from the N-terminus, the 206-residue chain is MIVIIDYGMGNLRSVQKGFEKVGYSARVTDDPAVVAQADKLVLPGVGAFRDCMDQLTAGGFVEPILRHVESGRPFLGICLGLQLLFTESEEFGHHQGLNIIPGRVVRFPGDMQEQGEVLKVPHMGWNQIDIQRPAPIFQGLDSGESVYFVHSYYVVPEDASVVAATADYGRTFCAAVWRDNVMATQFHPEKSQQVGLRILKNFGDM.

In terms of domain architecture, Glutamine amidotransferase type-1 spans methionine 1–methionine 206. The active-site Nucleophile is cysteine 79. Catalysis depends on residues histidine 188 and glutamate 190.

Heterodimer of HisH and HisF.

The protein localises to the cytoplasm. The catalysed reaction is 5-[(5-phospho-1-deoxy-D-ribulos-1-ylimino)methylamino]-1-(5-phospho-beta-D-ribosyl)imidazole-4-carboxamide + L-glutamine = D-erythro-1-(imidazol-4-yl)glycerol 3-phosphate + 5-amino-1-(5-phospho-beta-D-ribosyl)imidazole-4-carboxamide + L-glutamate + H(+). It carries out the reaction L-glutamine + H2O = L-glutamate + NH4(+). The protein operates within amino-acid biosynthesis; L-histidine biosynthesis; L-histidine from 5-phospho-alpha-D-ribose 1-diphosphate: step 5/9. IGPS catalyzes the conversion of PRFAR and glutamine to IGP, AICAR and glutamate. The HisH subunit catalyzes the hydrolysis of glutamine to glutamate and ammonia as part of the synthesis of IGP and AICAR. The resulting ammonia molecule is channeled to the active site of HisF. This Syntrophotalea carbinolica (strain DSM 2380 / NBRC 103641 / GraBd1) (Pelobacter carbinolicus) protein is Imidazole glycerol phosphate synthase subunit HisH.